A 372-amino-acid polypeptide reads, in one-letter code: Queuine tRNA-ribosyltransferase (372 aa).

Asp-92 functions as the Proton acceptor in the catalytic mechanism. Substrate is bound by residues 92–96, Asp-146, Gln-188, and Gly-215; that span reads DSGGY. The tract at residues 246-252 is RNA binding; it reads GIGSLRE. Asp-265 functions as the Nucleophile in the catalytic mechanism. The segment at 270–274 is RNA binding; important for wobble base 34 recognition; it reads TRLGR. The Zn(2+) site is built by Cys-303, Cys-305, Cys-308, and His-334.

Belongs to the queuine tRNA-ribosyltransferase family. Homodimer. Within each dimer, one monomer is responsible for RNA recognition and catalysis, while the other monomer binds to the replacement base PreQ1. It depends on Zn(2+) as a cofactor.

The enzyme catalyses 7-aminomethyl-7-carbaguanine + guanosine(34) in tRNA = 7-aminomethyl-7-carbaguanosine(34) in tRNA + guanine. It participates in tRNA modification; tRNA-queuosine biosynthesis. Its function is as follows. Catalyzes the base-exchange of a guanine (G) residue with the queuine precursor 7-aminomethyl-7-deazaguanine (PreQ1) at position 34 (anticodon wobble position) in tRNAs with GU(N) anticodons (tRNA-Asp, -Asn, -His and -Tyr). Catalysis occurs through a double-displacement mechanism. The nucleophile active site attacks the C1' of nucleotide 34 to detach the guanine base from the RNA, forming a covalent enzyme-RNA intermediate. The proton acceptor active site deprotonates the incoming PreQ1, allowing a nucleophilic attack on the C1' of the ribose to form the product. After dissociation, two additional enzymatic reactions on the tRNA convert PreQ1 to queuine (Q), resulting in the hypermodified nucleoside queuosine (7-(((4,5-cis-dihydroxy-2-cyclopenten-1-yl)amino)methyl)-7-deazaguanosine). The protein is Queuine tRNA-ribosyltransferase of Prochlorococcus marinus (strain MIT 9211).